The sequence spans 263 residues: MARGPKKHLKRVAAPKHWMLDKLTGVFAPRPSTGPHKLRECLPLIVFLRNRLKYALTGDEVKKICMQRFIKIDGKVRVDITYPAGFMDVISIDKTGEHFRLVYDTKGRFAVQRITVEEAKYKLCKVRKITVGMKGIPHLVTHDARTIRYPDPLIKVNDTVQIDLGTGKIINFIKFDTGNVCMVIGGANLGRVGVITNRERHPGSFDVVHVKDANGNSFATRISNIFVIGNGNKPWISLPRGKGIRLTIAEERDKRLATKQSSG.

The S4 RNA-binding domain maps to 42–104; it reads LPLIVFLRNR…TGEHFRLVYD (63 aa).

The protein belongs to the eukaryotic ribosomal protein eS4 family.

In Pongo pygmaeus (Bornean orangutan), this protein is Small ribosomal subunit protein eS4 (RPS4Y1).